A 155-amino-acid polypeptide reads, in one-letter code: 6,7-dimethyl-8-ribityllumazine synthase (155 aa).

5-amino-6-(D-ribitylamino)uracil is bound by residues phenylalanine 22, 56 to 58, and 80 to 82; these read AFE and AVI. 85-86 lines the (2S)-2-hydroxy-3-oxobutyl phosphate pocket; that stretch reads ST. The active-site Proton donor is histidine 88. A 5-amino-6-(D-ribitylamino)uracil-binding site is contributed by phenylalanine 113. Arginine 127 lines the (2S)-2-hydroxy-3-oxobutyl phosphate pocket.

It belongs to the DMRL synthase family.

The catalysed reaction is (2S)-2-hydroxy-3-oxobutyl phosphate + 5-amino-6-(D-ribitylamino)uracil = 6,7-dimethyl-8-(1-D-ribityl)lumazine + phosphate + 2 H2O + H(+). It participates in cofactor biosynthesis; riboflavin biosynthesis; riboflavin from 2-hydroxy-3-oxobutyl phosphate and 5-amino-6-(D-ribitylamino)uracil: step 1/2. Catalyzes the formation of 6,7-dimethyl-8-ribityllumazine by condensation of 5-amino-6-(D-ribitylamino)uracil with 3,4-dihydroxy-2-butanone 4-phosphate. This is the penultimate step in the biosynthesis of riboflavin. In Bifidobacterium longum subsp. infantis (strain ATCC 15697 / DSM 20088 / JCM 1222 / NCTC 11817 / S12), this protein is 6,7-dimethyl-8-ribityllumazine synthase.